The primary structure comprises 210 residues: Cilia- and flagella-associated protein 418 (210 aa).

A required for interaction with FAM161A region spans residues 1 to 77 (MAKDLDELLD…LINEIFEEPN (77 aa)). Residues 24–59 (LDLGERPKGGSGGGGTHSGDRNGAQEKDTLRSTETF) are disordered. The span at 41-59 (SGDRNGAQEKDTLRSTETF) shows a compositional bias: basic and acidic residues.

In terms of assembly, interacts (via N-terminus) with FAM161A (via central region); the interaction is direct.

It is found in the cytoplasm. The protein localises to the photoreceptor inner segment. Functionally, may be involved in photoreceptor outer segment disk morphogenesis. This Rattus norvegicus (Rat) protein is Cilia- and flagella-associated protein 418.